Here is a 499-residue protein sequence, read N- to C-terminus: Probable cytosol aminopeptidase (499 aa).

Mn(2+)-binding residues include Lys263 and Asp268. The active site involves Lys275. Positions 286, 345, and 347 each coordinate Mn(2+). The active site involves Arg349.

Belongs to the peptidase M17 family. The cofactor is Mn(2+).

The protein localises to the cytoplasm. The enzyme catalyses Release of an N-terminal amino acid, Xaa-|-Yaa-, in which Xaa is preferably Leu, but may be other amino acids including Pro although not Arg or Lys, and Yaa may be Pro. Amino acid amides and methyl esters are also readily hydrolyzed, but rates on arylamides are exceedingly low.. The catalysed reaction is Release of an N-terminal amino acid, preferentially leucine, but not glutamic or aspartic acids.. In terms of biological role, presumably involved in the processing and regular turnover of intracellular proteins. Catalyzes the removal of unsubstituted N-terminal amino acids from various peptides. The chain is Probable cytosol aminopeptidase from Bradyrhizobium sp. (strain BTAi1 / ATCC BAA-1182).